The following is a 123-amino-acid chain: Small ribosomal subunit protein uS12 (123 aa).

At D89 the chain carries 3-methylthioaspartic acid.

Belongs to the universal ribosomal protein uS12 family. Part of the 30S ribosomal subunit. Contacts proteins S8 and S17. May interact with IF1 in the 30S initiation complex.

In terms of biological role, with S4 and S5 plays an important role in translational accuracy. Functionally, interacts with and stabilizes bases of the 16S rRNA that are involved in tRNA selection in the A site and with the mRNA backbone. Located at the interface of the 30S and 50S subunits, it traverses the body of the 30S subunit contacting proteins on the other side and probably holding the rRNA structure together. The combined cluster of proteins S8, S12 and S17 appears to hold together the shoulder and platform of the 30S subunit. This is Small ribosomal subunit protein uS12 from Beijerinckia indica subsp. indica (strain ATCC 9039 / DSM 1715 / NCIMB 8712).